Reading from the N-terminus, the 66-residue chain is Large ribosomal subunit protein bL33c (66 aa).

It belongs to the bacterial ribosomal protein bL33 family.

The protein localises to the plastid. It is found in the chloroplast. In Nicotiana sylvestris (Wood tobacco), this protein is Large ribosomal subunit protein bL33c.